The sequence spans 253 residues: Large ribosomal subunit protein bL28m (253 aa).

The transit peptide at 1–55 (MPLHKYPPALWDVLKLKDGIYARLPEHYRRSLLEKHKPYPVHWKPHGLKYRLNPK) directs the protein to the mitochondrion.

Belongs to the bacterial ribosomal protein bL28 family. Component of the mitochondrial ribosome large subunit (39S) which comprises a 16S rRNA and about 50 distinct proteins.

Its subcellular location is the mitochondrion. In Xenopus laevis (African clawed frog), this protein is Large ribosomal subunit protein bL28m (mrpl28).